The sequence spans 237 residues: Segregation and condensation protein A (237 aa).

It belongs to the ScpA family. As to quaternary structure, component of a cohesin-like complex composed of ScpA, ScpB and the Smc homodimer, in which ScpA and ScpB bind to the head domain of Smc. The presence of the three proteins is required for the association of the complex with DNA.

The protein resides in the cytoplasm. In terms of biological role, participates in chromosomal partition during cell division. May act via the formation of a condensin-like complex containing Smc and ScpB that pull DNA away from mid-cell into both cell halves. This chain is Segregation and condensation protein A, found in Streptococcus thermophilus (strain CNRZ 1066).